A 487-amino-acid polypeptide reads, in one-letter code: 3-ketoacyl-CoA synthase 17 (487 aa).

The next 2 helical transmembrane spans lie at 23–43 and 57–77; these read LITH…FMNV and STGF…FFMS. An FAE domain is found at 74 to 363; that stretch reads FFMSRPRSIY…FFATFVAKRL (290 aa). Active-site residues include Cys-218, His-297, His-382, His-386, His-415, and Asn-419.

Belongs to the thiolase-like superfamily. Chalcone/stilbene synthases family. Expressed in flowers.

The protein resides in the membrane. It catalyses the reaction a very-long-chain acyl-CoA + malonyl-CoA + H(+) = a very-long-chain 3-oxoacyl-CoA + CO2 + CoA. The protein operates within lipid metabolism; fatty acid biosynthesis. With respect to regulation, inhibited by K3 herbicides such as alachlor, allidochlor, anilofos, cafenstrole, fentrazamide and flufenacet. Strongly inhibited by metazachlor. Functionally, active on saturated acyl-CoAs up to C22. Mediates the synthesis of VLCFAs from 20 to 26 carbons in length (e.g. C20:1, C20, C24, C26). The sequence is that of 3-ketoacyl-CoA synthase 17 from Arabidopsis thaliana (Mouse-ear cress).